A 446-amino-acid polypeptide reads, in one-letter code: Na(+)-translocating NADH-quinone reductase subunit A (446 aa).

It belongs to the NqrA family. In terms of assembly, composed of six subunits; NqrA, NqrB, NqrC, NqrD, NqrE and NqrF.

The enzyme catalyses a ubiquinone + n Na(+)(in) + NADH + H(+) = a ubiquinol + n Na(+)(out) + NAD(+). Its function is as follows. NQR complex catalyzes the reduction of ubiquinone-1 to ubiquinol by two successive reactions, coupled with the transport of Na(+) ions from the cytoplasm to the periplasm. NqrA to NqrE are probably involved in the second step, the conversion of ubisemiquinone to ubiquinol. This chain is Na(+)-translocating NADH-quinone reductase subunit A, found in Aliivibrio salmonicida (strain LFI1238) (Vibrio salmonicida (strain LFI1238)).